A 316-amino-acid polypeptide reads, in one-letter code: Olfactory receptor 2T11 (316 aa).

The Extracellular portion of the chain corresponds to 1–22; the sequence is MTNTSSSDFTLLGLLVNSEAAG. Asparagine 3 is a glycosylation site (N-linked (GlcNAc...) asparagine). Residues 23–46 traverse the membrane as a helical segment; sequence IVFTVILAVFLGAVTANLVMIFLI. Residues 47–54 are Cytoplasmic-facing; the sequence is QVDSRLHT. The chain crosses the membrane as a helical span at residues 55 to 76; the sequence is PMYFLLSQLSIMDTLFICTTVP. Residues 77–97 lie on the Extracellular side of the membrane; it reads KLLADMVSKEKIISFVACGIQ. Residues cysteine 94 and cysteine 186 are joined by a disulfide bond. Residues 98–117 traverse the membrane as a helical segment; that stretch reads IFLYLTMIGSEFFLLGLMAY. Residues 118–136 lie on the Cytoplasmic side of the membrane; it reads DCYVAVCNPLRYPVLMNRK. A helical membrane pass occupies residues 137–155; that stretch reads KCLLLAAGAWFGGSLDGFL. The Extracellular portion of the chain corresponds to 156–192; it reads LTPITMNVPYCGSRSINHFFCEIPAVLKLACADTSLY. Residues 193–216 traverse the membrane as a helical segment; it reads ETLMYICCVLMLLIPISIISTSYS. Topologically, residues 217 to 233 are cytoplasmic; that stretch reads LILLTIHRMPSAEGRKK. The helical transmembrane segment at 234 to 256 threads the bilayer; that stretch reads AFTTCSSHLTVVSIFYGAAFYTY. At 257 to 269 the chain is on the extracellular side; it reads VLPQSFHTPEQDK. The helical transmembrane segment at 270-289 threads the bilayer; the sequence is VVSAFYTIVTPMLNPLIYSL. The Cytoplasmic portion of the chain corresponds to 290–316; that stretch reads RNKDVIGAFKKVFACCSSAQKVATSDA.

The protein belongs to the G-protein coupled receptor 1 family.

Its subcellular location is the cell membrane. Its function is as follows. Odorant receptor. The protein is Olfactory receptor 2T11 (OR2T11) of Homo sapiens (Human).